Consider the following 160-residue polypeptide: UPF0262 protein BCAN_A0255 (160 aa).

Belongs to the UPF0262 family.

The sequence is that of UPF0262 protein BCAN_A0255 from Brucella canis (strain ATCC 23365 / NCTC 10854 / RM-666).